Reading from the N-terminus, the 957-residue chain is MKKFFDSRREQGGSGLGSGSSGGGGSTSGLGSGYIGRVFGIGRQQVTVDEVLAEGGFAIVFLVRTSNGMKCALKRMFVNNEHDLQVCKREIQIMRDLSGHKNIVGYIDSSINSVSSGDVWEVLILMDFCRGGQVVNLMNQRLQTGFTENEVLQIFCDTCEAVARLHQCKTPIIHRDLKVENILLHDRGHYVLCDFGSATNKFQNPQTEGVNAVEDEIKKYTTLSYRAPEMVNLYSGKVITTKADIWALGCLLYKLCYFTLPFGESQVAICDGNFTIPDNSRYSQDMHCLIRYMLEPDPDKRPDIYQVSYFSFKLLKKECPIPNVQNSPIPTKLPEPVKASEAAAKKTQPKARLTDPIPTTETSIAPRQRPKAGQTQPNPGILPIQPALTPRKRATVQPPPQAAGSSNQPGLLASVPQPKTQPPPSQPLPQSQPKQPQAPPTSQQPPSAPAQALPTQAQATPQHQQQLFLKQQQQQQTAPPAQQPAGTFYQQPQQQAQAPQFQAVHPAAQQPVIAQFPVVSQGSSQQQLIQNFYQQQQQQQQLATALHQQQLLTQQAALQQKTTAAAAPQPQAQPAAAASPAPAQEPAQIQAPVRQQPKVQTTPPPTIQGQKLGSLTPPSSPKAQRAGHRRILSDVTHSAVFGVPASKSTQLLQAAAAEASLNKSKSATTTPSGSPRASQQNVYNPSEGSTWNPFDDDNFSKLTAEELLNKDFAKLGEGKYPEKLGGSAESLIPGFQPTQGDAFAASSFSAGTAEKRKGGQTMDSSLPLLSVSDPFIPLQVPDAPEKLIEGLKSPDTSLLLPDLLPMTDPFGSTSDAVIEKADVAVESLIPGLEPPVPQRLPSQTESVTSNRTDSLTGEDSLIDCSLLSNPTTDLLEEFAPIAISAPAHKAAEDSNLISGFDVPEGSDKVAEDEFDPIPVLITKNPQGGHSRNSSGSSESSLPNLARSLLLVDQLIDL.

M1 bears the N-acetylmethionine mark. Positions 1–11 are enriched in basic and acidic residues; it reads MKKFFDSRREQ. Residues 1–25 form a disordered region; that stretch reads MKKFFDSRREQGGSGLGSGSSGGGG. Gly residues predominate over residues 12 to 25; it reads GGSGLGSGSSGGGG. S14 bears the Phosphoserine mark. A Protein kinase domain is found at 46–315; the sequence is VTVDEVLAEG…QVSYFSFKLL (270 aa). Residues 52 to 60 and K74 each bind ATP; that span reads LAEGGFAIV. The Proton acceptor role is filled by D176. A Phosphotyrosine modification is found at Y234. Position 235 is a phosphoserine (S235). 2 disordered regions span residues 326-506 and 563-629; these read NSPI…AVHP and TAAA…AGHR. T354 and T389 each carry phosphothreonine. R391 carries the post-translational modification Omega-N-methylarginine. Residues 436–448 are compositionally biased toward pro residues; the sequence is PQAPPTSQQPPSA. The residue at position 441 (T441) is a Phosphothreonine. Composition is skewed to low complexity over residues 449–506 and 563–601; these read PAQA…AVHP and TAAAAPQPQAQPAAAASPAPAQEPAQIQAPVRQQPKVQT. T602 is modified (phosphothreonine). Polar residues predominate over residues 607–617; that stretch reads IQGQKLGSLTP. S614 carries the phosphoserine modification. T616 bears the Phosphothreonine mark. S619, S620, S633, and S646 each carry phosphoserine. T649 carries the post-translational modification Phosphothreonine. Residues 660–697 are disordered; sequence SLNKSKSATTTPSGSPRASQQNVYNPSEGSTWNPFDDD. The span at 668-692 shows a compositional bias: polar residues; it reads TTTPSGSPRASQQNVYNPSEGSTWN. The residue at position 683 (Y683) is a Phosphotyrosine. A phosphoserine mark is found at S727, S842, S933, and S934. The segment at 819–956 is clathrin-binding domain (CBD); that stretch reads EKADVAVESL…SLLLVDQLID (138 aa). Disordered regions lie at residues 832–855 and 919–941; these read LEPPVPQRLPSQTESVTSNRTDSL and VLITKNPQGGHSRNSSGSSESSL. Over residues 840 to 855 the composition is skewed to polar residues; it reads LPSQTESVTSNRTDSL. Over residues 927–940 the composition is skewed to low complexity; it reads GGHSRNSSGSSESS.

The protein belongs to the protein kinase superfamily. Ser/Thr protein kinase family. In terms of assembly, interacts (via CBD domain) with clathrin. Interacts with AP-2 complex. Interacts with NUMB. Interacts with alpha-adaptin. Interacts with EPS15 isoform 2. Interacts with membrane-bound activated NOTCH1 but not with the inactive full-length form of NOTCH1. Preferentially interacts with monoubiquitinated activated NOTCH1 compared to the non-ubiquitinated form. Autophosphorylated. As to expression, detected in brain (at protein level).

It is found in the cell membrane. It localises to the membrane. The protein resides in the clathrin-coated pit. Its subcellular location is the presynapse. It catalyses the reaction L-seryl-[protein] + ATP = O-phospho-L-seryl-[protein] + ADP + H(+). The enzyme catalyses L-threonyl-[protein] + ATP = O-phospho-L-threonyl-[protein] + ADP + H(+). With respect to regulation, stimulated by clathrin. Its function is as follows. Regulates clathrin-mediated endocytosis by phosphorylating the AP2M1/mu2 subunit of the adaptor protein complex 2 (AP-2) which ensures high affinity binding of AP-2 to cargo membrane proteins during the initial stages of endocytosis. Preferentially, may phosphorylate substrates on threonine residues. Regulates phosphorylation of other AP-2 subunits as well as AP-2 localization and AP-2-mediated internalization of ligand complexes. Phosphorylates NUMB and regulates its cellular localization, promoting NUMB localization to endosomes. Binds to and stabilizes the activated form of NOTCH1, increases its localization in endosomes and regulates its transcriptional activity. This is AP2-associated protein kinase 1 (AAK1) from Bos taurus (Bovine).